A 324-amino-acid chain; its full sequence is tRNA dimethylallyltransferase (324 aa).

17–24 (GPTASGKT) contacts ATP. 19 to 24 (TASGKT) contacts substrate. Interaction with substrate tRNA stretches follow at residues 42-45 (DSAL), 166-170 (QRIQR), 251-256 (RCVGYR), and 284-291 (KRQITWLR).

It belongs to the IPP transferase family. As to quaternary structure, monomer. Mg(2+) serves as cofactor.

The enzyme catalyses adenosine(37) in tRNA + dimethylallyl diphosphate = N(6)-dimethylallyladenosine(37) in tRNA + diphosphate. In terms of biological role, catalyzes the transfer of a dimethylallyl group onto the adenine at position 37 in tRNAs that read codons beginning with uridine, leading to the formation of N6-(dimethylallyl)adenosine (i(6)A). The polypeptide is tRNA dimethylallyltransferase (Burkholderia orbicola (strain MC0-3)).